Consider the following 1059-residue polypeptide: MAGNDWLNSYLEAILDVGPGLDDAKSSLLLRERGRFSPTRYFVEEVIGFDETDLYRSWVRASSSRSPQERNTRLENMCWRIWNLARQKKQLESEAVQRVNKRRLERERGRREATADMSEDLSEGERGDPVSDVSTHGGGDSVKSRLPRISSADAMETWVNSQKGKKLYIVLISIHGLIRGENMELGRDSDTGGQVKYVVELARALGSMPGVYRVDLLTRQVSSPDVDWSYGEPTEMLAPRNTDEFGDDMGESSGAYIIRIPFGPRNKYIPKEELWPYIPEFVDGAMGHIIQMSKALGEQIGSGHAVWPVAIHGHYADAGDSAALLSGALNVPMIFTGHSLGRDKLEQLLKQGRLSTDEINSTYKIMRRIEAEELALDGTEIVITSTRQEIEEQWRLYNGFDPVLERKIRARIRRNVSCYGRYMPRMSVIPPGMEFHHIAPLDGDIETEPEGILDHPAPQDPPIWSEIMRFFSNPRKPVILALARPDPKKNITTLVKAFGECRPLRELANLTLIMGNRDGIDEMSSTSSSVLLSVLKLIDKYDLYGQVAYPKHHKQSDVPDIYRLAAKTKGVFINPAFIEPFGLTLIEAAAYGLPMVATKNGGPVDIHRVLDNGLLIDPHDEKSIADALLKLVSNKQLWAKCRQNGLKNIHLFSWPEHCKTYLSKIATCKPRHPQWQRSEDGGESSESEESPGDSLRDIQDLSLNLKFSLDGERSGDSGNDNSLDPDGNATDRTTKLENAVLSWSKGISKDTRRGGATEKSGQNSNASKFPPLRSRNRLFVIAVDCDTTSGLLEMIKLIFEAAGEERAEGSVGFILSTSLTISEIQSFLISGGLSPNDFDAYICNSGSDLYYPSLNSEDRLFVGDLYFHSHIEYRWGGEGLRKTLIRWASSITDKKSENNEQIVSPAEQLSTDYCYAFNVRKAGMAPPLKELRKLMRIQALRCHPIYCQNGTRLNVIPVLASRSQALRYLYVRWGFELSKMVVFVGECGDTDYEGLVGGLHKSVILKGVGSRAISQLHNNRNYPLSDVMPLDSPNIVQATEGSSSADIQALLEKVGYHKG.

Disordered stretches follow at residues 95–145, 671–695, 710–731, and 748–769; these read AVQR…VKSR, RHPQ…GDSL, DGER…NATD, and SKDT…ASKF. Over residues 102-114 the composition is skewed to basic and acidic residues; the sequence is RRLERERGRREAT. Over residues 681–691 the composition is skewed to acidic residues; it reads GGESSESEESP.

Belongs to the glycosyltransferase 1 family. As to quaternary structure, homodimer or homotetramer.

It catalyses the reaction beta-D-fructose 6-phosphate + UDP-alpha-D-glucose = sucrose 6(F)-phosphate + UDP + H(+). Its pathway is glycan biosynthesis; sucrose biosynthesis; sucrose from D-fructose 6-phosphate and UDP-alpha-D-glucose: step 1/2. Activity is regulated by phosphorylation and moderated by concentration of metabolites and light. In terms of biological role, plays a role in photosynthetic sucrose synthesis by catalyzing the rate-limiting step of sucrose biosynthesis from UDP-glucose and fructose- 6-phosphate. Involved in the regulation of carbon partitioning in the leaves of plants. May regulate the synthesis of sucrose and therefore play a major role as a limiting factor in the export of photoassimilates out of the leaf. Plays a role for sucrose availability that is essential for plant growth and fiber elongation. This Vicia faba (Broad bean) protein is Probable sucrose-phosphate synthase (SPS).